We begin with the raw amino-acid sequence, 885 residues long: Lon protease homolog 2, peroxisomal (885 aa).

In terms of domain architecture, Lon N-terminal spans 12–256 (LAVLPFRNKV…KATELVDRHL (245 aa)). The tract at residues 70 to 104 (LLSPGVGSDSGEGGSKVGGSAVESSKQDTKNGKEP) is disordered. Gly residues predominate over residues 77 to 86 (SDSGEGGSKV). Positions 94–104 (SKQDTKNGKEP) are enriched in basic and acidic residues. Residue 409–416 (GPPGVGKT) coordinates ATP. In terms of domain architecture, Lon proteolytic spans 690 to 875 (VASPGVSVGL…EEVLDHAFEG (186 aa)). Catalysis depends on residues Ser-781 and Lys-824. Positions 883 to 885 (SKL) match the Microbody targeting signal motif.

This sequence belongs to the peptidase S16 family.

The protein resides in the peroxisome matrix. The catalysed reaction is Hydrolysis of proteins in presence of ATP.. In terms of biological role, ATP-dependent serine protease that mediates the selective degradation of misfolded and unassembled polypeptides in the peroxisomal matrix. Necessary for type 2 peroxisome targeting signal (PTS2)-containing protein processing and facilitates peroxisome matrix protein import. The polypeptide is Lon protease homolog 2, peroxisomal (LON1) (Zea mays (Maize)).